Consider the following 201-residue polypeptide: Transgelin (201 aa).

At A2 the chain carries N-acetylalanine. The region spanning 24–137 is the Calponin-homology (CH) domain; that stretch reads EELEERLVEW…RTLMALGSLA (114 aa). S166 carries the post-translational modification Phosphoserine. K172 carries the N6-acetyllysine modification. One copy of the Calponin-like repeat lies at 175–200; sequence IGLQMGSNRGASQAGMTGYGRPRQII. S181 carries the phosphoserine modification. An Omega-N-methylarginine modification is found at R183.

The protein belongs to the calponin family.

The protein resides in the cytoplasm. Its function is as follows. Actin cross-linking/gelling protein. Involved in calcium interactions and contractile properties of the cell that may contribute to replicative senescence. The sequence is that of Transgelin (TAGLN) from Homo sapiens (Human).